The primary structure comprises 363 residues: Aminomethyltransferase (363 aa).

Belongs to the GcvT family. The glycine cleavage system is composed of four proteins: P, T, L and H.

The catalysed reaction is N(6)-[(R)-S(8)-aminomethyldihydrolipoyl]-L-lysyl-[protein] + (6S)-5,6,7,8-tetrahydrofolate = N(6)-[(R)-dihydrolipoyl]-L-lysyl-[protein] + (6R)-5,10-methylene-5,6,7,8-tetrahydrofolate + NH4(+). The glycine cleavage system catalyzes the degradation of glycine. This Staphylococcus aureus (strain MRSA252) protein is Aminomethyltransferase.